The chain runs to 156 residues: Small ribosomal subunit protein uS7 (156 aa).

The protein belongs to the universal ribosomal protein uS7 family. In terms of assembly, part of the 30S ribosomal subunit. Contacts proteins S9 and S11.

Functionally, one of the primary rRNA binding proteins, it binds directly to 16S rRNA where it nucleates assembly of the head domain of the 30S subunit. Is located at the subunit interface close to the decoding center, probably blocks exit of the E-site tRNA. The protein is Small ribosomal subunit protein uS7 of Mycoplasmopsis synoviae (strain 53) (Mycoplasma synoviae).